A 616-amino-acid polypeptide reads, in one-letter code: MPKYRSATTTHGRNMAGARALWRATGMTDADFGKPIIAVVNSFTQFVPGHVHLRDLGKLVAEQIEAAGGVAKEFNTIAVDDGIAMGHGGMLYSLPSRELIADSVEYMVNAHCADAMVCISNCDKITPGMLMASLRLNIPVIFVSGGPMEAGKTKLSDQIIKLDLVDAMIQGADPKVSDSQSAQVERSACPTCGSCSGMFTANSMNCLTEALGLSQPGNGSLLATHADRKQLFLNAGKRIVELTKRYYEQDDESALPRNIASKAAFENAMTLDIAMGGSTNTVLHLLAAAQEAEIDFTMSDIDKLSRKVPQLCKVAPSTQKYHMEDVHRAGGVIGILGELDRAGLLNRDVKNVLGLTLPQTLEQYDIIVTQDDAVKNMFRAGPAGIRTTQAFSQDCRWDTLDDDRSNGCIRSLEHAYSKDGGLAVLYGNFAENGCIVKTAGVDDSILKFTGPAKVYESQDDAVEAILGGKVVAGDVVVIRYEGPKGGPGMQEMLYPTSFLKSMGLGKACALITDGRFSGGTSGLSIGHVSPEAASGGSIGLIEDGDLIAIDIPNRGIQLQVSDAELAARREAQEARGDKAWTPKNRERQVSFALRAYASLATSADKGAVRDKSKLGG.

Asp81 is a binding site for Mg(2+). [2Fe-2S] cluster is bound at residue Cys122. Residues Asp123 and Lys124 each coordinate Mg(2+). Lys124 is subject to N6-carboxylysine. Position 195 (Cys195) interacts with [2Fe-2S] cluster. A Mg(2+)-binding site is contributed by Glu491. The active-site Proton acceptor is the Ser517.

The protein belongs to the IlvD/Edd family. As to quaternary structure, homodimer. [2Fe-2S] cluster is required as a cofactor. Mg(2+) serves as cofactor.

It catalyses the reaction (2R)-2,3-dihydroxy-3-methylbutanoate = 3-methyl-2-oxobutanoate + H2O. The catalysed reaction is (2R,3R)-2,3-dihydroxy-3-methylpentanoate = (S)-3-methyl-2-oxopentanoate + H2O. It functions in the pathway amino-acid biosynthesis; L-isoleucine biosynthesis; L-isoleucine from 2-oxobutanoate: step 3/4. The protein operates within amino-acid biosynthesis; L-valine biosynthesis; L-valine from pyruvate: step 3/4. In terms of biological role, functions in the biosynthesis of branched-chain amino acids. Catalyzes the dehydration of (2R,3R)-2,3-dihydroxy-3-methylpentanoate (2,3-dihydroxy-3-methylvalerate) into 2-oxo-3-methylpentanoate (2-oxo-3-methylvalerate) and of (2R)-2,3-dihydroxy-3-methylbutanoate (2,3-dihydroxyisovalerate) into 2-oxo-3-methylbutanoate (2-oxoisovalerate), the penultimate precursor to L-isoleucine and L-valine, respectively. The polypeptide is Dihydroxy-acid dehydratase (Escherichia coli O127:H6 (strain E2348/69 / EPEC)).